Reading from the N-terminus, the 185-residue chain is Adenine phosphoribosyltransferase (185 aa).

The protein belongs to the purine/pyrimidine phosphoribosyltransferase family. Homodimer.

The protein resides in the cytoplasm. It catalyses the reaction AMP + diphosphate = 5-phospho-alpha-D-ribose 1-diphosphate + adenine. It functions in the pathway purine metabolism; AMP biosynthesis via salvage pathway; AMP from adenine: step 1/1. Its function is as follows. Catalyzes a salvage reaction resulting in the formation of AMP, that is energically less costly than de novo synthesis. The protein is Adenine phosphoribosyltransferase of Kineococcus radiotolerans (strain ATCC BAA-149 / DSM 14245 / SRS30216).